Here is a 143-residue protein sequence, read N- to C-terminus: Alpha-S2-casein-like B (143 aa).

The N-terminal stretch at 1–15 is a signal peptide; sequence MKFIILTCLLAVALA.

The protein belongs to the alpha-casein family. Mammary gland specific. Secreted in milk.

It is found in the secreted. Functionally, important role in the capacity of milk to transport calcium phosphate. The chain is Alpha-S2-casein-like B (Csn1s2b) from Mus musculus (Mouse).